Here is a 931-residue protein sequence, read N- to C-terminus: Synaptopodin (931 aa).

Disordered regions lie at residues 56 to 78 (EEEG…APAI) and 113 to 243 (ASVS…MEGY). Ser134 carries the post-translational modification Phosphoserine. The span at 136–148 (TEKDLKEAKERSQ) shows a compositional bias: basic and acidic residues. Composition is skewed to polar residues over residues 153 to 164 (QLTTPPSSNSRG) and 188 to 200 (PKLS…TGHP). Residues Ser202, Ser222, and Ser258 each carry the phosphoserine modification. A compositionally biased stretch (low complexity) spans 214–232 (PTSPSKPGSPKHSSSQSPS). The interval 280–420 (GLHLSQNRET…SSSGPPAADL (141 aa)) is disordered. Polar residues-rich tracts occupy residues 282–293 (HLSQNRETQQSS) and 309–370 (INQN…NTPS). Residues 373–384 (DGQRPVPAEEVR) show a composition bias toward basic and acidic residues. Residues Ser490 and Ser514 each carry the phosphoserine modification. 2 disordered regions span residues 542 to 591 (RRPL…KGQV) and 691 to 711 (SPRI…EASG). Residue Thr549 is modified to Phosphothreonine. The PPxY motif motif lies at 551–554 (PPTY). Polar residues predominate over residues 556–568 (ETLSTAPVASQVR). At Ser569 the chain carries Phosphoserine. Low complexity predominate over residues 569–580 (SPPSYSTLYPSS). A PPxY motif motif is present at residues 570–573 (PPSY). Residues Ser691, Ser742, Ser746, and Ser767 each carry the phosphoserine modification. Thr771 is modified (phosphothreonine). Residues 775–918 (SLYHGYLPEN…RPSFSTRNAG (144 aa)) are disordered. Over residues 816–841 (SSRATSSRASSRTVSPRAASPAKPSS) the composition is skewed to low complexity. Ser835 is modified (phosphoserine). Arg850 carries the omega-N-methylarginine modification. Ser856 is subject to Phosphoserine. Positions 874–895 (VQDSLQPTAVSPTYSSDISPVS) are enriched in polar residues.

It belongs to the synaptopodin family. Interacts with BAIAP1. Interacts with actin. Interacts (via PPxY motifs) with WWC1 (via WW domains). O-glycosylated. Expressed at high levels in brain and at moderate, but still significant levels in the heart, skeletal muscle, lung and kidney. In brain, expressed in the cerebral cortex, hippocampus, olfactory bulb and striatum.

Its subcellular location is the cytoplasm. It localises to the cytoskeleton. It is found in the cell junction. The protein resides in the tight junction. The protein localises to the perikaryon. Its subcellular location is the cell projection. It localises to the dendritic spine. It is found in the postsynaptic density. The protein resides in the synapse. The protein localises to the cytosol. In terms of biological role, actin-associated protein that may play a role in modulating actin-based shape and motility of dendritic spines and renal podocyte foot processes. Seems to be essential for the formation of spine apparatuses in spines of telencephalic neurons, which is involved in synaptic plasticity. The chain is Synaptopodin (Synpo) from Rattus norvegicus (Rat).